A 641-amino-acid chain; its full sequence is Uromodulin (641 aa).

Residues 1–24 (MGQPPLTWMLMVVVASWFITTAAT) form the signal peptide. N-linked (GlcNAc...) asparagine glycosylation is present at Asn-25. The region spanning 28–64 (EARWCSECHSNATCTEDEAVTTCTCQEGFTGDGLTCV) is the EGF-like 1 domain. 21 disulfides stabilise this stretch: Cys-32/Cys-41, Cys-35/Cys-50, Cys-52/Cys-63, Cys-69/Cys-83, Cys-77/Cys-92, Cys-94/Cys-106, Cys-112/Cys-126, Cys-120/Cys-135, Cys-137/Cys-148, Cys-150/Cys-161, Cys-155/Cys-170, Cys-174/Cys-267, Cys-195/Cys-282, Cys-217/Cys-255, Cys-223/Cys-287, Cys-248/Cys-256, Cys-297/Cys-306, Cys-300/Cys-315, Cys-317/Cys-347, Cys-335/Cys-425, and Cys-366/Cys-389. The 43-residue stretch at 65 to 107 (DLDECAIPGAHNCSANSSCVNTPGSFSCVCPEGFRLSPGLGCT) folds into the EGF-like 2; calcium-binding domain. N-linked (GlcNAc...) asparagine glycosylation occurs at Asn-76. Positions 108–149 (DVDECAEPGLSHCHALATCVNVVGNYLCVCPAGYRGDGWHCE) constitute an EGF-like 3; calcium-binding domain. The tract at residues 150 to 171 (CSPGSCGPGLDCVPEGDALVCA) is beta hairpin. The segment at 172 to 291 (DPCQAHRTLD…CHLAYCTDPS (120 aa)) is D10C. A glycan (N-linked (GlcNAc...) asparagine) is linked at Asn-232. Asn-275 is a glycosylation site (N-linked (GlcNAc...) asparagine). Positions 292 to 323 (SVEGTCEECSIDEDCKSDNGRWHCQCKQDFNI) constitute an EGF-like 4 domain. N-linked (GlcNAc...) asparagine glycosylation occurs at Asn-322. Residues 334–429 (ECGANDMKVS…KINFACSYPL (96 aa)) are ZP-N. The ZP domain maps to 334-589 (ECGANDMKVS…PTCSGTRFRS (256 aa)). The segment at 430–453 (DMKVSLKTSLQPVVSALNITVGGT) is flexible ZP-N/ZP-C linker; important for secretion and polymerization into filaments. An N-linked (GlcNAc...) asparagine glycan is attached at Asn-447. The tract at residues 454-464 (GMFTVRMALFQ) is internal hydrophobic patch (IHP). A ZP-C region spans residues 454-589 (GMFTVRMALF…PTCSGTRFRS (136 aa)). 3 cysteine pairs are disulfide-bonded: Cys-506–Cys-566, Cys-527–Cys-582, and Cys-571–Cys-578. The tract at residues 586 to 589 (RFRS) is essential for cleavage by HPN. An external hydrophobic patch (EHP); regulates polymerization into filaments region spans residues 598-606 (VLNLGPITR). The GPI-anchor amidated serine moiety is linked to residue Ser-614. The propeptide at 615–641 (RAAFSSLGLLKVWLPLLLSATLTLTFQ) is removed in mature form.

Homodimer that then polymerizes into long filaments. The filaments can additionally assemble laterally to form a sheet. The filaments consist of a zigzag-shaped backbone with laterally protruding arms which interact with bacterial adhesin fimH. Two fimH molecules can bind to a single UMOD monomer. Post-translationally, N-glycosylated. Proteolytically cleaved at a conserved C-terminal proteolytic cleavage site to generate the secreted form found in urine. This cleavage is catalyzed by HPN.

The protein localises to the apical cell membrane. It localises to the basolateral cell membrane. Its subcellular location is the cell projection. The protein resides in the cilium membrane. It is found in the secreted. Its function is as follows. Functions in biogenesis and organization of the apical membrane of epithelial cells of the thick ascending limb of Henle's loop (TALH), where it promotes formation of complex filamentous gel-like structure that may play a role in the water barrier permeability. May serve as a receptor for binding and endocytosis of cytokines (IL-1, IL-2) and TNF. Facilitates neutrophil migration across renal epithelia. In the urine, may contribute to colloid osmotic pressure, retards passage of positively charged electrolytes, and inhibits formation of liquid containing supersaturated salts and subsequent formation of salt crystals. Protects against urinary tract infections by binding to type 1 fimbriated E.coli. Binds to bacterial adhesin fimH which mediates the stable formation of bacterial aggregates, prevents the binding of E.coli to uroplakins UPK1A and UPK1B which act as urothelial receptors for type I fimbriae, and allows for pathogen clearance through micturation. Also promotes aggregation of other bacteria including K.pneumoniae, P.aeruginosa and S.mitis and so may also protect against other uropathogens. This chain is Uromodulin (UMOD), found in Pongo abelii (Sumatran orangutan).